The primary structure comprises 255 residues: MLKRRIIPCLDVKEGRVVKGIEFVQLRDIGDPVEIAKYYDESGADELVFLDITASTERRQTMLDVVSAVARKVFIPLTVGGGIRSLEDISSLLKAGADKVSLNTLAVESPSLIREAADRFGSQCIVVAIDVKFKDGEYYVYTYGGKQKTDLLAVEWAKQVAALGAGELLVTSMNQDGKQSGYDLSILEQLREVVDIPIIASGGAGNAEHVVEALEKVDAALLASILHDRKTTVEEVKHVCKSHNLPMRFVSTKMD.

Residues aspartate 11 and aspartate 130 contribute to the active site.

It belongs to the HisA/HisF family. Heterodimer of HisH and HisF.

The protein localises to the cytoplasm. It catalyses the reaction 5-[(5-phospho-1-deoxy-D-ribulos-1-ylimino)methylamino]-1-(5-phospho-beta-D-ribosyl)imidazole-4-carboxamide + L-glutamine = D-erythro-1-(imidazol-4-yl)glycerol 3-phosphate + 5-amino-1-(5-phospho-beta-D-ribosyl)imidazole-4-carboxamide + L-glutamate + H(+). It participates in amino-acid biosynthesis; L-histidine biosynthesis; L-histidine from 5-phospho-alpha-D-ribose 1-diphosphate: step 5/9. In terms of biological role, IGPS catalyzes the conversion of PRFAR and glutamine to IGP, AICAR and glutamate. The HisF subunit catalyzes the cyclization activity that produces IGP and AICAR from PRFAR using the ammonia provided by the HisH subunit. This Exiguobacterium sp. (strain ATCC BAA-1283 / AT1b) protein is Imidazole glycerol phosphate synthase subunit HisF.